The chain runs to 116 residues: Large ribosomal subunit protein bL20 (116 aa).

It belongs to the bacterial ribosomal protein bL20 family.

Functionally, binds directly to 23S ribosomal RNA and is necessary for the in vitro assembly process of the 50S ribosomal subunit. It is not involved in the protein synthesizing functions of that subunit. In Acaryochloris marina (strain MBIC 11017), this protein is Large ribosomal subunit protein bL20.